The chain runs to 116 residues: Small ribosomal subunit protein uS13 (116 aa).

The interval 92-116 is disordered; it reads RRGLPVRGQNTKNNARTRKGAKRSR. Positions 106–116 are enriched in basic residues; that stretch reads ARTRKGAKRSR.

It belongs to the universal ribosomal protein uS13 family. As to quaternary structure, part of the 30S ribosomal subunit. Forms a loose heterodimer with protein S19. Forms two bridges to the 50S subunit in the 70S ribosome.

Located at the top of the head of the 30S subunit, it contacts several helices of the 16S rRNA. In the 70S ribosome it contacts the 23S rRNA (bridge B1a) and protein L5 of the 50S subunit (bridge B1b), connecting the 2 subunits; these bridges are implicated in subunit movement. Contacts the tRNAs in the A and P-sites. The sequence is that of Small ribosomal subunit protein uS13 from Lactobacillus delbrueckii subsp. bulgaricus (strain ATCC 11842 / DSM 20081 / BCRC 10696 / JCM 1002 / NBRC 13953 / NCIMB 11778 / NCTC 12712 / WDCM 00102 / Lb 14).